Consider the following 28-residue polypeptide: Dermaseptin-6TR (28 aa).

In terms of tissue distribution, expressed by the skin glands.

It is found in the secreted. In terms of biological role, has antimicrobial activity. This is Dermaseptin-6TR from Phyllomedusa trinitatis (Trinidad leaf frog).